Here is a 229-residue protein sequence, read N- to C-terminus: MIDHTHLRLFQFCDSQFPTGAFSHSFGLETYIQRNIIHDDHTFIAWLKMFLQEQLTYSDGLAMRLVYDALENDDTQKVLHIDKLMFVQNLPKETRVGAKQMGTRMVKLALELYNNPWIAWYHQQMQDKKAKLNPAICFTMLGHYLGVDIETIIDYYLYQNVSSLTQNAVRAIPLGQTAGQKIVTHMIPYIEETRKQIFELKEADFGMTAPGLELNQMAHENVNVRIFIS.

The protein belongs to the UreF family. In terms of assembly, ureD, UreF and UreG form a complex that acts as a GTP-hydrolysis-dependent molecular chaperone, activating the urease apoprotein by helping to assemble the nickel containing metallocenter of UreC. The UreE protein probably delivers the nickel.

It is found in the cytoplasm. Functionally, required for maturation of urease via the functional incorporation of the urease nickel metallocenter. This is Urease accessory protein UreF from Staphylococcus aureus (strain MRSA252).